The primary structure comprises 347 residues: Hydroxymethylglutaryl-CoA synthase (347 aa).

2 residues coordinate (3S)-3-hydroxy-3-methylglutaryl-CoA: Asp29 and Ala30. Catalysis depends on Glu80, which acts as the Proton donor/acceptor. Positions 112 and 153 each coordinate (3S)-3-hydroxy-3-methylglutaryl-CoA. Cys112 acts as the Acyl-thioester intermediate in catalysis. Arg199 contributes to the CoA binding site. (3S)-3-hydroxy-3-methylglutaryl-CoA is bound by residues Thr201 and His234. The active-site Proton donor/acceptor is the His234. Lys239 is a CoA binding site. The (3S)-3-hydroxy-3-methylglutaryl-CoA site is built by Arg243, Asn266, and Ser296.

It belongs to the thiolase-like superfamily. Archaeal HMG-CoA synthase family. Interacts with acetoacetyl-CoA thiolase that catalyzes the precedent step in the pathway and with a DUF35 protein. The acetoacetyl-CoA thiolase/HMG-CoA synthase complex channels the intermediate via a fused CoA-binding site, which allows for efficient coupling of the endergonic thiolase reaction with the exergonic HMGCS reaction.

It catalyses the reaction acetoacetyl-CoA + acetyl-CoA + H2O = (3S)-3-hydroxy-3-methylglutaryl-CoA + CoA + H(+). It functions in the pathway metabolic intermediate biosynthesis; (R)-mevalonate biosynthesis; (R)-mevalonate from acetyl-CoA: step 2/3. Catalyzes the condensation of acetyl-CoA with acetoacetyl-CoA to form 3-hydroxy-3-methylglutaryl-CoA (HMG-CoA). Functions in the mevalonate (MVA) pathway leading to isopentenyl diphosphate (IPP), a key precursor for the biosynthesis of isoprenoid compounds that are building blocks of archaeal membrane lipids. This chain is Hydroxymethylglutaryl-CoA synthase, found in Methanocella arvoryzae (strain DSM 22066 / NBRC 105507 / MRE50).